The primary structure comprises 276 residues: Ubiquinone biosynthesis protein coq11, mitochondrial (276 aa).

The protein belongs to the NAD(P)-dependent epimerase/dehydratase family.

The protein localises to the mitochondrion. Acts in the coenzyme Q biosynthetic pathway. The polypeptide is Ubiquinone biosynthesis protein coq11, mitochondrial (Schizosaccharomyces pombe (strain 972 / ATCC 24843) (Fission yeast)).